We begin with the raw amino-acid sequence, 522 residues long: Subtilisin-like protease 10 (522 aa).

The N-terminal stretch at 1–19 is a signal peptide; that stretch reads MFFFKGVVAVLSFFSAVNA. The propeptide occupies 20–117; that stretch reads APFMKPNNGT…VERDQIGTSQ (98 aa). The 78-residue stretch at 36-113 folds into the Inhibitor I9 domain; that stretch reads SYIVLLKRDI…HVAHVERDQI (78 aa). One can recognise a Peptidase S8 domain in the interval 127–405; that stretch reads NWGLGRLSNS…KLLVNGANGT (279 aa). Active-site charge relay system residues include Asp-159 and His-190. Asn-251 is a glycosylation site (N-linked (GlcNAc...) asparagine). Residue Ser-348 is the Charge relay system of the active site. A compositionally biased stretch (polar residues) spans 383–397; that stretch reads SASVKNPGPNTTNKL. The interval 383-515 is disordered; that stretch reads SASVKNPGPN…GWNRPMWWNR (133 aa). 2 N-linked (GlcNAc...) asparagine glycosylation sites follow: Asn-392 and Asn-403. Positions 432–459 are enriched in pro residues; that stretch reads SQNPPPGQNPPPGQNPPPEQPAPSPPAN.

The protein belongs to the peptidase S8 family.

The protein localises to the secreted. Secreted subtilisin-like serine protease with keratinolytic activity that contributes to pathogenicity. The protein is Subtilisin-like protease 10 (SUB10) of Trichophyton verrucosum (strain HKI 0517).